Reading from the N-terminus, the 228-residue chain is E3 ubiquitin-protein ligase RNF114 (228 aa).

The RING-type zinc finger occupies 29–68 (CPVCLEVYEKPVQVPCGHVFCSACLQECLKPKKPVCGVCR). Positions 91 and 94 each coordinate Zn(2+). A C2HC RNF-type zinc finger spans residues 91–110 (CHGCRKNFFLSKIRAHVATC). At lysine 102 the chain carries N6-acetyllysine. 2 residues coordinate Zn(2+): histidine 106 and cysteine 110. N6-acetyllysine is present on lysine 112.

In terms of assembly, interacts with XAF1, the interaction increases XAF1 stability and proapoptotic effects, and may regulate IFN signaling. In terms of processing, autoubiquitinated. Polyubiquitinated in the presence of E2 enzymes UBE2D1, UBE2D2 and UBE2D3, but only monoubiquitinated in the presence of UBE2E1.

The protein resides in the cytoplasm. The protein localises to the nucleus. It catalyses the reaction S-ubiquitinyl-[E2 ubiquitin-conjugating enzyme]-L-cysteine + [acceptor protein]-L-lysine = [E2 ubiquitin-conjugating enzyme]-L-cysteine + N(6)-ubiquitinyl-[acceptor protein]-L-lysine.. Its pathway is protein modification; protein ubiquitination. Its function is as follows. E3 ubiquitin-protein ligase that promotes the ubiquitination of various substrates. In turn, participates in the regulation of many biological processes including cell cycle, apoptosis, osteoclastogenesis as well as innate or adaptive immunity. Acts as negative regulator of NF-kappa-B-dependent transcription by promoting the ubiquitination and stabilization of the NF-kappa-B inhibitor TNFAIP3. May promote the ubiquitination of TRAF6 as well. Also acts as a negative regulator of T-cell activation. Inhibits cellular dsRNA responses and interferon production by targeting MAVS component for proteasomal degradation. Ubiquitinates the CDK inhibitor CDKN1A leading to its degradationand probably also CDKN1B and CDKN1C. This activity stimulates cell cycle G1-to-S phase transition and suppresses cellular senescence. May play a role in spermatogenesis. Inhibits classical swine fever virus replication by mediating 'K27'-linked ubiquitination of viral NS4B and inducing its degradation via the proteasome. This Sus scrofa (Pig) protein is E3 ubiquitin-protein ligase RNF114 (RNF114).